The sequence spans 157 residues: DNA gyrase inhibitor (157 aa).

This sequence belongs to the DNA gyrase inhibitor family. In terms of assembly, interacts with DNA gyrase.

It localises to the cytoplasm. Functionally, inhibits the supercoiling activity of DNA gyrase. Acts by inhibiting DNA gyrase at an early step, prior to (or at the step of) binding of DNA by the gyrase. It protects cells against toxins that target DNA gyrase, by inhibiting activity of these toxins and reducing the formation of lethal double-strand breaks in the cell. The protein is DNA gyrase inhibitor of Cronobacter sakazakii (strain ATCC BAA-894) (Enterobacter sakazakii).